The chain runs to 326 residues: N-acetyl-gamma-glutamyl-phosphate reductase (326 aa).

Cysteine 155 is an active-site residue.

The protein belongs to the NAGSA dehydrogenase family. Type 1 subfamily.

The protein localises to the cytoplasm. It carries out the reaction N-acetyl-L-glutamate 5-semialdehyde + phosphate + NADP(+) = N-acetyl-L-glutamyl 5-phosphate + NADPH + H(+). The protein operates within amino-acid biosynthesis; L-arginine biosynthesis; N(2)-acetyl-L-ornithine from L-glutamate: step 3/4. In terms of biological role, catalyzes the NADPH-dependent reduction of N-acetyl-5-glutamyl phosphate to yield N-acetyl-L-glutamate 5-semialdehyde. This chain is N-acetyl-gamma-glutamyl-phosphate reductase, found in Shewanella baltica (strain OS223).